Reading from the N-terminus, the 142-residue chain is Large ribosomal subunit protein bL17 (142 aa).

The protein belongs to the bacterial ribosomal protein bL17 family. Part of the 50S ribosomal subunit. Contacts protein L32.

The sequence is that of Large ribosomal subunit protein bL17 from Rickettsia bellii (strain OSU 85-389).